Consider the following 452-residue polypeptide: MSLSKLTQTCFSRHQAKTFIRLYSSDFKSLLGPPAVANPYADNGRTRFAPIVPINHGNVFASIKLPINETQEAIAFKSEVEEAPKVEKLEVESPKIEAEKVLSSPPPAPAPTSSAIDELNSLKDSLEKLESAASKSSSSSGGSSDNSDPGNAEEIEARRKRMERNTRIGAYVLFGGSIIGFISFCFYYGRAQRDEFGNVISDEFSGSFLAPFYRIANSFKLWRDYVVEPAREQLLPDPLPAPYLQPKYTIVIELKNILVHPEWTYKTGYRFLKRPALDYFLDVIGYPNFEVVIYSSESMMTAAPVVDSFDPKQRIMYKLFRDCTKYMNGHHVKDLSKLNRDLSKVIYIDFDAKSGQLNPENMLRVPEWKGNMDDTSLVDLAELLKTIHLSDAEDVRPMLQYYSQYDDPAKEFRRRAVYLSQQEEQKKQQPDDSSMLKRYSGRLFGSRRHVNA.

Residues 1 to 23 constitute a mitochondrion transit peptide; it reads MSLSKLTQTCFSRHQAKTFIRLY. The Mitochondrial matrix portion of the chain corresponds to 24-167; the sequence is SSDFKSLLGP…RRKRMERNTR (144 aa). Disordered stretches follow at residues 96–115 and 130–153; these read IEAEKVLSSPPPAPAPTSSA and ESAASKSSSSSGGSSDNSDPGNAE. Low complexity predominate over residues 131 to 144; the sequence is SAASKSSSSSGGSS. A helical transmembrane segment spans residues 168 to 188; that stretch reads IGAYVLFGGSIIGFISFCFYY. At 189–452 the chain is on the mitochondrial intermembrane side; the sequence is GRAQRDEFGN…LFGSRRHVNA (264 aa). The 145-residue stretch at 243-387 folds into the FCP1 homology domain; the sequence is YLQPKYTIVI…VDLAELLKTI (145 aa).

This sequence belongs to the TIM50 family.

Its subcellular location is the mitochondrion inner membrane. Functionally, essential component of the TIM23 complex, a complex that mediates the translocation of transit peptide-containing proteins across the mitochondrial inner membrane. The sequence is that of Mitochondrial import inner membrane translocase subunit TIM50 (scpl-4) from Caenorhabditis elegans.